The sequence spans 235 residues: Ubiquinone/menaquinone biosynthesis C-methyltransferase UbiE (235 aa).

S-adenosyl-L-methionine contacts are provided by Thr-60 and Asp-81.

It belongs to the class I-like SAM-binding methyltransferase superfamily. MenG/UbiE family.

The catalysed reaction is a 2-demethylmenaquinol + S-adenosyl-L-methionine = a menaquinol + S-adenosyl-L-homocysteine + H(+). The enzyme catalyses a 2-methoxy-6-(all-trans-polyprenyl)benzene-1,4-diol + S-adenosyl-L-methionine = a 5-methoxy-2-methyl-3-(all-trans-polyprenyl)benzene-1,4-diol + S-adenosyl-L-homocysteine + H(+). The protein operates within quinol/quinone metabolism; menaquinone biosynthesis; menaquinol from 1,4-dihydroxy-2-naphthoate: step 2/2. Its pathway is cofactor biosynthesis; ubiquinone biosynthesis. In terms of biological role, methyltransferase required for the conversion of demethylmenaquinol (DMKH2) to menaquinol (MKH2) and the conversion of 2-polyprenyl-6-methoxy-1,4-benzoquinol (DDMQH2) to 2-polyprenyl-3-methyl-6-methoxy-1,4-benzoquinol (DMQH2). The polypeptide is Ubiquinone/menaquinone biosynthesis C-methyltransferase UbiE (Geotalea uraniireducens (strain Rf4) (Geobacter uraniireducens)).